Consider the following 190-residue polypeptide: Small ribosomal subunit protein uS7 (190 aa).

Position 2 is an N-acetylthreonine (T2).

This sequence belongs to the universal ribosomal protein uS7 family. As to quaternary structure, component of the small ribosomal subunit. Part of the small subunit (SSU) processome, composed of more than 70 proteins and the RNA chaperone small nucleolar RNA (snoRNA) U3.

It localises to the cytoplasm. It is found in the nucleus. Its subcellular location is the nucleolus. Component of the small ribosomal subunit. The ribosome is a large ribonucleoprotein complex responsible for the synthesis of proteins in the cell. Part of the small subunit (SSU) processome, first precursor of the small eukaryotic ribosomal subunit. During the assembly of the SSU processome in the nucleolus, many ribosome biogenesis factors, an RNA chaperone and ribosomal proteins associate with the nascent pre-rRNA and work in concert to generate RNA folding, modifications, rearrangements and cleavage as well as targeted degradation of pre-ribosomal RNA by the RNA exosome. The chain is Small ribosomal subunit protein uS7 (rps5) from Dictyostelium discoideum (Social amoeba).